Reading from the N-terminus, the 206-residue chain is BAG family molecular chaperone regulator 1B (206 aa).

Residues 122 to 202 (IEAYIDELQQ…QYLSKLDSTK (81 aa)) form the BAG domain. Ser144 carries the post-translational modification Phosphoserine.

As to quaternary structure, binds to the ATPase domain of HSP70/HSC chaperones.

In terms of biological role, inhibits the chaperone activity of HSP70/HSC70 by promoting substrate release. The polypeptide is BAG family molecular chaperone regulator 1B (bag102) (Schizosaccharomyces pombe (strain 972 / ATCC 24843) (Fission yeast)).